The primary structure comprises 644 residues: Exoribonuclease 2 (644 aa).

In terms of domain architecture, RNB spans 189–516 (REDLTALDFV…NHRLLKAVIK (328 aa)). An S1 motif domain is found at 561–643 (DTRFAAEIVD…ETRSIIARPV (83 aa)).

The protein belongs to the RNR ribonuclease family. RNase II subfamily.

The protein localises to the cytoplasm. The enzyme catalyses Exonucleolytic cleavage in the 3'- to 5'-direction to yield nucleoside 5'-phosphates.. Involved in mRNA degradation. Hydrolyzes single-stranded polyribonucleotides processively in the 3' to 5' direction. The polypeptide is Exoribonuclease 2 (Escherichia coli O6:K15:H31 (strain 536 / UPEC)).